Here is a 321-residue protein sequence, read N- to C-terminus: Proline-rich protein 2 (321 aa).

Residues 1–26 (MRILPKSGGGALCLLFVFALCSVAHS) form the signal peptide. Tandem repeats lie at residues 168–172 (PPLNL), 173–176 (PPLT), 177–181 (FPKIK), 185–189 (PPIYK), 190–194 (PPVVI), 198–202 (PCPPK), 207–211 (PIYKP), 212–217 (PVPIYK), 218–223 (PPVPIY), 225–229 (PPVVI), 234–238 (CPPKI), 240–244 (KPIYK), 245–251 (PPVPIYK), 252–256 (PPVVI), 262–266 (PPLHK), 267–271 (PIYKH), 272–276 (PVPIY), 277–281 (KPIFK), 282–286 (PPVVV), 288–292 (PKKPC), 293–297 (PPLPK), 298–302 (FPHFP), 303–307 (PKYIP), and 315–319 (PPFPS). The segment at 168 to 319 (PPLNLPPLTF…KFGKWPPFPS (152 aa)) is 24 X 5 AA approximate repeats.

It belongs to the plant proline-rich protein superfamily. Mostly expressed in aerial organs, particularly in expanding leaves, stems, flowers, and siliques.

It is found in the secreted. It localises to the cell wall. This Arabidopsis thaliana (Mouse-ear cress) protein is Proline-rich protein 2 (PRP2).